Consider the following 607-residue polypeptide: Large ribosomal subunit assembly factor BipA (607 aa).

Positions 3–198 constitute a tr-type G domain; the sequence is HSIRNIAIIA…SIIKYAPAPN (196 aa). Residues 15-20 and 128-131 contribute to the GTP site; these read DHGKTT and NKID.

Belongs to the TRAFAC class translation factor GTPase superfamily. Classic translation factor GTPase family. BipA subfamily. As to quaternary structure, monomer.

It localises to the cytoplasm. It carries out the reaction GTP + H2O = GDP + phosphate + H(+). In terms of biological role, a 50S ribosomal subunit assembly protein with GTPase activity, required for 50S subunit assembly at low temperatures, may also play a role in translation. Binds GTP and analogs. Binds the 70S ribosome between the 30S and 50S subunits, in a similar position as ribosome-bound EF-G; it contacts a number of ribosomal proteins, both rRNAs and the A-site tRNA. The protein is Large ribosomal subunit assembly factor BipA of Buchnera aphidicola subsp. Acyrthosiphon pisum (strain APS) (Acyrthosiphon pisum symbiotic bacterium).